A 116-amino-acid polypeptide reads, in one-letter code: Transcription elongation factor SPT4 homolog 1 (116 aa).

Residues 19 to 39 (CLRCRLVKTYDQFRDSGCENC) form a C4-type zinc finger.

The protein belongs to the SPT4 family.

The protein localises to the nucleus. Functionally, may regulate transcription elongation by RNA polymerase II. May enhance transcriptional pausing at sites proximal to the promoter, which may in turn facilitate the assembly of an elongation competent RNA polymerase II complex. The chain is Transcription elongation factor SPT4 homolog 1 from Arabidopsis thaliana (Mouse-ear cress).